The primary structure comprises 78 residues: Acyl carrier protein (78 aa).

The region spanning Ser2–Lys77 is the Carrier domain. Ser37 bears the O-(pantetheine 4'-phosphoryl)serine mark.

Belongs to the acyl carrier protein (ACP) family. 4'-phosphopantetheine is transferred from CoA to a specific serine of apo-ACP by AcpS. This modification is essential for activity because fatty acids are bound in thioester linkage to the sulfhydryl of the prosthetic group.

The protein localises to the cytoplasm. It functions in the pathway lipid metabolism; fatty acid biosynthesis. Functionally, carrier of the growing fatty acid chain in fatty acid biosynthesis. The polypeptide is Acyl carrier protein (Zymomonas mobilis subsp. mobilis (strain ATCC 31821 / ZM4 / CP4)).